We begin with the raw amino-acid sequence, 472 residues long: Probable sterol O-acyltransferase 2 (472 aa).

Serine 12 is modified (phosphoserine). Transmembrane regions (helical) follow at residues 61 to 81 (FTGFFVLFWVAVSIMIFMSFL), 111 to 131 (LAMSSMFLLAFPFQKIFALGY), and 135 to 155 (YGLGVYLYSILILLFLSHCVL). Asparagine 161 carries N-linked (GlcNAc...) asparagine glycosylation. The helical transmembrane segment at 170-190 (FILHSMVILMKLHSYNVVNGW) threads the bilayer. Residue asparagine 233 is glycosylated (N-linked (GlcNAc...) asparagine). 2 consecutive transmembrane segments (helical) span residues 262–282 (IHYLIECALGTFGCIFLLVII) and 317–337 (TVAFLMFPFMLSFLLVFWVIF). A glycan (N-linked (GlcNAc...) asparagine) is linked at asparagine 342. An FYXDWWN motif motif is present at residues 355–361 (FYDDWWN). Histidine 409 is a catalytic residue. The chain crosses the membrane as a helical span at residues 452–472 (IAFWFSIIIGIALIAALYILF).

Belongs to the membrane-bound acyltransferase family. Sterol o-acyltransferase subfamily.

Its subcellular location is the endoplasmic reticulum membrane. Functionally, sterol O-acyltransferase that catalyzes the formation of stery esters. This is Probable sterol O-acyltransferase 2 (are2) from Schizosaccharomyces pombe (strain 972 / ATCC 24843) (Fission yeast).